The sequence spans 20 residues: Putative 60 kDa spermidine-binding protein (20 aa).

The interval 1 to 20 is disordered; the sequence is SXAAVVEPPETSQNRIAKGE. The segment covering 10 to 20 has biased composition (polar residues); it reads ETSQNRIAKGE.

Dimer of 18 kDa and 60 kDa subunit.

The protein localises to the microsome membrane. The protein resides in the endoplasmic reticulum membrane. May have spermidine-binding activity. The sequence is that of Putative 60 kDa spermidine-binding protein from Zea mays (Maize).